The following is a 608-amino-acid chain: tRNA (guanine(37)-N(1))-methyltransferase 1 (608 aa).

The disordered stretch occupies residues 207-229 (SRPKKKKRRKEEERSEGKKRTGK). A compositionally biased stretch (basic and acidic residues) spans 216–229 (KEEERSEGKKRTGK). Residues arginine 425, 463–464 (DL), 491–492 (DG), and asparagine 514 each bind S-adenosyl-L-methionine.

It belongs to the class I-like SAM-binding methyltransferase superfamily. TRM5/TYW2 family. As to quaternary structure, monomer.

It localises to the mitochondrion matrix. It is found in the nucleus. Its subcellular location is the cytoplasm. The enzyme catalyses guanosine(37) in tRNA + S-adenosyl-L-methionine = N(1)-methylguanosine(37) in tRNA + S-adenosyl-L-homocysteine + H(+). Its function is as follows. Specifically methylates the N1 position of guanosine-37 in various cytoplasmic and mitochondrial tRNAs. Methylation is not dependent on the nature of the nucleoside 5' of the target nucleoside. This is the first step in the biosynthesis of wybutosine (yW), a modified base adjacent to the anticodon of tRNAs and required for accurate decoding. The sequence is that of tRNA (guanine(37)-N(1))-methyltransferase 1 from Vitis vinifera (Grape).